The sequence spans 314 residues: Ribonuclease Z (314 aa).

The Zn(2+) site is built by His-62, His-64, Asp-66, His-67, His-144, Asp-215, and His-273. Catalysis depends on Asp-66, which acts as the Proton acceptor.

Belongs to the RNase Z family. In terms of assembly, homodimer. It depends on Zn(2+) as a cofactor.

It carries out the reaction Endonucleolytic cleavage of RNA, removing extra 3' nucleotides from tRNA precursor, generating 3' termini of tRNAs. A 3'-hydroxy group is left at the tRNA terminus and a 5'-phosphoryl group is left at the trailer molecule.. Functionally, zinc phosphodiesterase, which displays some tRNA 3'-processing endonuclease activity. Probably involved in tRNA maturation, by removing a 3'-trailer from precursor tRNA. This is Ribonuclease Z from Prochlorococcus marinus (strain NATL2A).